The chain runs to 1403 residues: Perilipin-4 (1403 aa).

The disordered stretch occupies residues 1 to 21; it reads MSASGDGTRVPPKSKGKTLSS. Phosphoserine is present on residues S25 and S31. A disordered region spans residues 33–70; it reads RNLVSHTHSSTSTKDLQTATDPSGTPAPSSKVSTNSQM. Tandem repeats lie at residues 104 to 136, 137 to 169, 170 to 202, 203 to 235, 236 to 268, 269 to 301, 302 to 334, 335 to 367, 368 to 400, 401 to 433, 434 to 466, 467 to 499, 500 to 532, 533 to 565, 566 to 598, 599 to 631, 632 to 664, 665 to 697, 698 to 730, 731 to 763, 764 to 796, 797 to 829, 830 to 862, 863 to 895, 896 to 928, 929 to 961, 962 to 994, 995 to 1027, and 1028 to 1060. Positions 104–1060 are 29 X 33 AA approximate tandem repeat; it reads GVFGIMDAAK…VTSAMNMAKG (957 aa). S1281 is modified (phosphoserine). A Phosphothreonine modification is found at T1287.

It belongs to the perilipin family. In terms of tissue distribution, specifically expressed in white adipose tissue and also weakly detected in heart and skeletal muscle (at protein level).

Its subcellular location is the cell membrane. The protein localises to the cytoplasm. The protein resides in the lipid droplet. Functionally, may play a role in triacylglycerol packaging into adipocytes. May function as a coat protein involved in the biogenesis of lipid droplets. This chain is Perilipin-4 (Plin4), found in Mus musculus (Mouse).